A 191-amino-acid chain; its full sequence is Protein phosphatase inhibitor 2 (191 aa).

The segment covering 20–31 (ESNKPVRQKITE) has biased composition (basic and acidic residues). Disordered regions lie at residues 20–52 (ESNK…RGRA) and 67–191 (RNVL…PELI). Phosphoserine occurs at positions 45 and 47. Residues 93–109 (SDEEEEEADPMDQDEEG) show a composition bias toward acidic residues. The segment covering 114–136 (KNERFNAHRKAHYDEFRKVKELR) has biased composition (basic and acidic residues).

In terms of assembly, interacts with protein phosphatase 1. Interacts with TOPP1, SRK2D/SNRK2.2, SRK2I/SNRK2.3, SRK2E/SNRK2.6, SRK2C/SNRK2.8 and PYL11. Post-translationally, phosphorylated in vivo. As to expression, expressed in roots, cotyledons, leaves, flowers and siliques.

It localises to the nucleus. The protein localises to the cytoplasm. Inhibitor of protein-phosphatase 1 (PP1). Binds to and inhibits PP1 activity. Acts as negative regulator of abscisic acid (ABA) signaling. Enhances the inhibition of SRK2E/SNRK2.6 by TOPP1. May promote the interaction between TOPP1 and the ABA receptor PYL11. The chain is Protein phosphatase inhibitor 2 from Arabidopsis thaliana (Mouse-ear cress).